The primary structure comprises 506 residues: Sodium-coupled neutral amino acid symporter 2 (506 aa).

The tract at residues 1–23 (MKKAEMGRFNISPDEDSSSYSSN) is disordered. The Cytoplasmic portion of the chain corresponds to 1–76 (MKKAEMGRFN…HPGTTSFGMS (76 aa)). Residues 1-96 (MKKAEMGRFN…SGILGLSYAM (96 aa)) are regulates protein turnover upon amino acid deprivation. Phosphoserine is present on residues serine 12, serine 21, serine 22, and serine 55. A helical transmembrane segment spans residues 77–96 (VFNLSNAIVGSGILGLSYAM). Asparagine 82 contacts Na(+). The Extracellular portion of the chain corresponds to 97–102 (ANTGIA). The chain crosses the membrane as a helical span at residues 103-123 (LFIILLTFVSIFSLYSVHLLL). At 124–158 (KTANEGGSLLYEQLGYKAFGLVGKLAASGSITMQN) the chain is on the cytoplasmic side. Residues 159–177 (IGAMSSYLFIVKYELPLVI) traverse the membrane as a helical segment. Topologically, residues 178 to 188 (QALTNIEDKTG) are extracellular. A helical membrane pass occupies residues 189 to 209 (LWYLNGNYLVLLVSLVVILPL). Residues 210-217 (SLFRNLGY) lie on the Cytoplasmic side of the membrane. Residues 218–238 (LGYTSGLSLLCMVFFLIVVIC) form a helical membrane-spanning segment. Topologically, residues 239–292 (KKFQVPCPVEAALIINETINTTLTQPTALVPALSHNVTENDSCRPHYFIFNSQT) are extracellular. Cysteine 245 and cysteine 281 are joined by a disulfide. Residues asparagine 258 and asparagine 274 are each glycosylated (N-linked (GlcNAc...) asparagine). The chain crosses the membrane as a helical span at residues 293-313 (VYAVPILIFSFVCHPAVLPIY). Over 314 to 329 (EELKDRSRRRMMNVSK) the chain is Cytoplasmic. A helical membrane pass occupies residues 330-350 (ISFFAMFLMYLLAALFGYLTF). Residues 351–371 (YEHVESELLHTYSSILGTDIL) lie on the Extracellular side of the membrane. A helical membrane pass occupies residues 372 to 392 (LLIVRLAVLMAVTLTVPVVIF). Residue threonine 386 participates in Na(+) binding. Topologically, residues 393–413 (PIRSSVTHLLCASKDFSWWRH) are cytoplasmic. Residues 414–434 (SLITVSILAFTNLLVIFVPTI) traverse the membrane as a helical segment. Over 435–436 (RD) the chain is Extracellular. A helical transmembrane segment spans residues 437–457 (IFGFIGASAASMLIFILPSAF). At 458–472 (YIKLVKKEPMKSVQK) the chain is on the cytoplasmic side. Residues 473 to 495 (IGALFFLLSGVLVMTGSMALIVL) traverse the membrane as a helical segment. Topologically, residues 496–506 (DWVHNAPGGGH) are extracellular.

This sequence belongs to the amino acid/polyamine transporter 2 family. Post-translationally, polyubiquitination by NEDD4L regulates the degradation and the activity of SLC38A2.

Its subcellular location is the cell membrane. The enzyme catalyses L-alanine(in) + Na(+)(in) = L-alanine(out) + Na(+)(out). It catalyses the reaction glycine(in) + Na(+)(in) = glycine(out) + Na(+)(out). The catalysed reaction is L-serine(in) + Na(+)(in) = L-serine(out) + Na(+)(out). It carries out the reaction L-proline(in) + Na(+)(in) = L-proline(out) + Na(+)(out). The enzyme catalyses L-methionine(in) + Na(+)(in) = L-methionine(out) + Na(+)(out). It catalyses the reaction L-histidine(in) + Na(+)(in) = L-histidine(out) + Na(+)(out). The catalysed reaction is L-asparagine(in) + Na(+)(in) = L-asparagine(out) + Na(+)(out). It carries out the reaction L-glutamine(in) + Na(+)(in) = L-glutamine(out) + Na(+)(out). The enzyme catalyses L-threonine(in) + Na(+)(in) = L-threonine(out) + Na(+)(out). It catalyses the reaction L-leucine(in) + Na(+)(in) = L-leucine(out) + Na(+)(out). The catalysed reaction is L-phenylalanine(in) + Na(+)(in) = L-phenylalanine(out) + Na(+)(out). Inhibited by N-methyl-D-glucamine. Inhibited by choline. Allosteric regulation of sodium ions binding by pH. Its function is as follows. Symporter that cotransports neutral amino acids and sodium ions from the extracellular to the intracellular side of the cell membrane. The transport is pH-sensitive, Li(+)-intolerant, electrogenic, driven by the Na(+) electrochemical gradient and cotransports of neutral amino acids and sodium ions with a stoichiometry of 1:1. May function in the transport of amino acids at the blood-brain barrier. May function in the transport of amino acids in the supply of maternal nutrients to the fetus through the placenta. Maintains a key metabolic glutamine/glutamate balance underpinning retrograde signaling by dendritic release of the neurotransmitter glutamate. Transports L-proline in differentiating osteoblasts for the efficient synthesis of proline-enriched proteins and provides proline essential for osteoblast differentiation and bone formation during bone development. The chain is Sodium-coupled neutral amino acid symporter 2 from Pan paniscus (Pygmy chimpanzee).